We begin with the raw amino-acid sequence, 372 residues long: MAYHSFLVEPISCHAWNKDRTQIAICPNNHEVHIYEKSGAKWTKVHELKEHNGQVTGIDWAPESNRIVTCGTDRNAYVWTLKGRTWKPTLVILRINRAARCVRWAPNENKFAVGSGSRVISICYFEQENDWWVCKHIKKPIRSTVLSLDWHPNNVLLAAGSCDFKCRIFSAYIKEVEERPAPTPWGSKMPFGELMFESSSSCGWVHGVCFSASGSRVAWVSHDSTVCLADADKKMAVATLASETLPLLALTFITDNSLVAAGHDCFPVLFTYDAAAGMLSFGGRLDVPKQSSQRGLTARERFQNLDKKASSEGGTAAGAGLDSLHKNSVSQISVLSGGKAKCSQFCTTGMDGGMSIWDVKSLESALKDLKIK.

WD repeat units lie at residues 6–45 (FLVEPISCHAWNKDRTQIAICPNNHEVHIYEKSGAKWTKV), 50–89 (EHNGQVTGIDWAPESNRIVTCGTDRNAYVWTLKGRTWKPT), 94–135 (RINR…WVCK), 140–179 (PIRSTVLSLDWHPNNVLLAAGSCDFKCRIFSAYIKEVEER), 242–280 (SETLPLLALTFITDNSLVAAGHDCFPVLFTYDAAAGMLS), and 324–367 (LHKN…SALK).

The protein belongs to the WD repeat ARPC1 family. Component of the Arp2/3 complex composed of ACTR2/ARP2, ACTR3/ARP3, ARPC1B/p41-ARC, ARPC2/p34-ARC, ARPC3/p21-ARC, ARPC4/p20-ARC and ARPC5/p16-ARC.

It localises to the cytoplasm. The protein localises to the cytoskeleton. The protein resides in the nucleus. Component of the Arp2/3 complex, a multiprotein complex that mediates actin polymerization upon stimulation by nucleation-promoting factor (NPF). The Arp2/3 complex mediates the formation of branched actin networks in the cytoplasm, providing the force for cell motility. In addition to its role in the cytoplasmic cytoskeleton, the Arp2/3 complex also promotes actin polymerization in the nucleus, thereby regulating gene transcription and repair of damaged DNA. The Arp2/3 complex promotes homologous recombination (HR) repair in response to DNA damage by promoting nuclear actin polymerization, leading to drive motility of double-strand breaks (DSBs). The polypeptide is Actin-related protein 2/3 complex subunit 1B (Homo sapiens (Human)).